A 431-amino-acid polypeptide reads, in one-letter code: Dual-specificity RNA methyltransferase RlmN (431 aa).

Residues 1–26 (MATASLDTARPERRAGSDPFIEKTPE) are disordered. A compositionally biased stretch (basic and acidic residues) spans 9 to 26 (ARPERRAGSDPFIEKTPE). The active-site Proton acceptor is the E138. The Radical SAM core domain occupies 144-394 (ANDRGTLCVS…VRTPRGRDIL (251 aa)). A disulfide bond links C151 and C397. Residues C158, C162, and C165 each contribute to the [4Fe-4S] cluster site. S-adenosyl-L-methionine-binding positions include 223–224 (GE), S255, 277–279 (SLH), and N354. C397 (S-methylcysteine intermediate) is an active-site residue.

It belongs to the radical SAM superfamily. RlmN family. The cofactor is [4Fe-4S] cluster.

It is found in the cytoplasm. It catalyses the reaction adenosine(2503) in 23S rRNA + 2 reduced [2Fe-2S]-[ferredoxin] + 2 S-adenosyl-L-methionine = 2-methyladenosine(2503) in 23S rRNA + 5'-deoxyadenosine + L-methionine + 2 oxidized [2Fe-2S]-[ferredoxin] + S-adenosyl-L-homocysteine. The catalysed reaction is adenosine(37) in tRNA + 2 reduced [2Fe-2S]-[ferredoxin] + 2 S-adenosyl-L-methionine = 2-methyladenosine(37) in tRNA + 5'-deoxyadenosine + L-methionine + 2 oxidized [2Fe-2S]-[ferredoxin] + S-adenosyl-L-homocysteine. Functionally, specifically methylates position 2 of adenine 2503 in 23S rRNA and position 2 of adenine 37 in tRNAs. m2A2503 modification seems to play a crucial role in the proofreading step occurring at the peptidyl transferase center and thus would serve to optimize ribosomal fidelity. This is Dual-specificity RNA methyltransferase RlmN from Methylobacterium sp. (strain 4-46).